The primary structure comprises 678 residues: Glutamic acid-rich protein (678 aa).

The first 25 residues, 1–25, serve as a signal peptide directing secretion; it reads MNVLFLSYNICILFFVVCTLNFSTK. Residues 56-79 show a composition bias toward basic and acidic residues; sequence EKNKDDNSKSETLLKEEKDEKDDV. 3 disordered regions span residues 56 to 194, 225 to 445, and 520 to 678; these read EKNK…NLDE, ISSV…VVKN, and VVPR…NAKI. Residues 80–107 show a composition bias toward polar residues; that stretch reads PTTSNDNLKNAHNNNEISSSTDPTNIIN. Positions 109 to 120 are enriched in basic and acidic residues; sequence NDKDNENSVDKK. A run of 15 repeats spans residues 120–122, 123–125, 126–128, 129–131, 132–134, 135–137, 138–140, 141–143, 144–146, 147–149, 150–152, 153–155, 156–158, 159–161, and 162–164. Residues 120–164 are 15 X 3 AA tandem repeats of K-K-[DEHK]; the sequence is KKDKKEKKHKKDKKEKKEKKDKKEKKDKKEKKHKKEKKHKKDKKK. Over residues 121-165 the composition is skewed to basic residues; sequence KDKKEKKHKKDKKEKKEKKDKKEKKDKKEKKHKKEKKHKKDKKKK. Composition is skewed to basic and acidic residues over residues 231-329 and 371-411; these read TSND…EEKE and PEEH…EHKS. 14 tandem repeats follow at residues 372-376, 377-381, 382-386, 387-391, 392-396, 397-401, 402-406, 407-411, 412-416, 417-421, 422-426, 427-431, 432-436, and 437-441. The segment at 372–416 is 9 X 5 AA tandem repeats of [EGK]-E-H-K-[EKS]; sequence EEHKEGEHKEEEHKEGEHKEGEHKEEEHKEEEHKKEEHKSKEHKS. The span at 412–443 shows a compositional bias: basic residues; that stretch reads KEHKSKGKKDKGKKDKGKHKKAKKEKVKKHVV. A 5 X 5 AA tandem repeats of K-[GAV]-K-[KH]-[DKEH] region spans residues 417–441; that stretch reads KGKKDKGKKDKGKHKKAKKEKVKKH. A compositionally biased stretch (basic and acidic residues) spans 532-565; it reads AKIEEAELQKQKHVDKEEDKKEESKEVQEESKEV. A compositionally biased stretch (acidic residues) spans 566–663; sequence QEDEEEVEED…EEEEEEEEEE (98 aa). A compositionally biased stretch (basic residues) spans 667-678; the sequence is KIKRNLRKNAKI.

This is Glutamic acid-rich protein (GARP) from Plasmodium falciparum (isolate FC27 / Papua New Guinea).